Consider the following 548-residue polypeptide: uncharacterized protein (548 aa).

The 193-residue stretch at Lys8–Lys200 folds into the DhaL domain.

This is an uncharacterized protein from Staphylococcus aureus (strain bovine RF122 / ET3-1).